A 239-amino-acid chain; its full sequence is U2 small nuclear ribonucleoprotein A' (239 aa).

LRR repeat units lie at residues 19–40, 42–63, 64–85, and 88–109; these read KETE…GVLR, VHDA…PRMK, RLQT…IGKV, and NLKT…DPLA. The LRRCT domain occupies 122 to 160; that stretch reads NPVAQKQYYRLYLIWRIPSLHILDFERVRRNERLRAEEV.

The protein belongs to the U2 small nuclear ribonucleoprotein A family. In terms of assembly, belongs to the 40S cdc5-associated complex (or cwf complex), a spliceosome sub-complex reminiscent of a late-stage spliceosome composed of the U2, U5 and U6 snRNAs and at least brr2, cdc5, cwf2/prp3, cwf3/syf1, cwf4/syf3, cwf5/ecm2, spp42/cwf6, cwf7/spf27, cwf8, cwf9, cwf10, cwf11, cwf12, prp45/cwf13, cwf14, cwf15, cwf16, cwf17, cwf18, cwf19, cwf20, cwf21, cwf22, cwf23, cwf24, cwf25, cwf26, cyp7/cwf27, cwf28, cwf29/ist3, lea1, msl1, prp5/cwf1, prp10, prp12/sap130, prp17, prp22, sap61, sap62, sap114, sap145, slu7, smb1, smd1, smd3, smf1, smg1 and syf2.

The protein resides in the nucleus. Functionally, involved in pre-mRNA splicing. This protein is associated with sn-RNP U2. It helps the A' protein to bind stem loop IV of U2 snRNA. The chain is U2 small nuclear ribonucleoprotein A' (lea1) from Schizosaccharomyces pombe (strain 972 / ATCC 24843) (Fission yeast).